Consider the following 117-residue polypeptide: DNA polymerase epsilon subunit 4 (117 aa).

A disordered region spans residues 1–36 (MAAAAAAGSGTPREEEGPAGEAAASQPQAPTSVPGA). Position 2 is an N-acetylalanine (A2). At T11 the chain carries Phosphothreonine. The segment covering 19 to 30 (AGEAAASQPQAP) has biased composition (low complexity). S25 bears the Phosphoserine mark.

In terms of assembly, component of the DNA polymerase epsilon complex consisting of four subunits: the catalytic subunit POLE and the accessory subunits POLE2, POLE3 and POLE4. Interaction with POLE3 is a prerequisite for further binding with POLE and POLE2.

The protein localises to the nucleus. Functionally, accessory component of the DNA polymerase epsilon complex. Participates in DNA repair and in chromosomal DNA replication. The chain is DNA polymerase epsilon subunit 4 (POLE4) from Homo sapiens (Human).